Reading from the N-terminus, the 117-residue chain is Con-Ins T3 (117 aa).

An N-terminal signal peptide occupies residues 1–24 (MTTSFYFLLMALGLLLYVCQSSFG). The propeptide occupies 25–29 (NQHTR). Pro34 is subject to 4-hydroxyproline; partial. Disulfide bonds link Cys38–Cys101, Cys50–Cys114, and Cys100–Cys105. Residues 53–94 (KRNDAGKKRGQASPLWQRGGSLSMLKARAKRNEAFHLQRAHR) constitute a propeptide, c peptide. Glu98 carries the post-translational modification 4-carboxyglutamate. Residue Glu109 is modified to 4-carboxyglutamate; partial. Cys114 is modified (cysteine amide). Residues 116–117 (NS) constitute a propeptide that is removed on maturation.

This sequence belongs to the insulin family. Heterodimer of A and B chains; disulfide-linked. In terms of tissue distribution, expressed by the venom gland.

The protein resides in the secreted. This venom insulin facilitates prey capture by rapidly inducing hypoglycemic shock. It is one of the smallest known insulin found in nature and lacks the C-terminal segment of the B chain that, in human insulin, mediates engagement of the insulin receptor (INSR) and assembly of the hormone's hexameric storage form. Despite lacking this segment, it both binds and activates human insulin receptor (long isoform (HIR-B) OF INSR) with only a 10-fold lower potency. In vivo, intraperitoneal injection of this peptide into zebrafish lowers blood glucose with the same potency than human insulin. In addition, when applied to water, this peptide reduces overall locomotor activity of zebrafish larvae, observed as a significant decrease in the percentage of time spent swimming and movement frequency. This is Con-Ins T3 from Conus tulipa (Fish-hunting cone snail).